Here is a 658-residue protein sequence, read N- to C-terminus: Endoglin (658 aa).

The N-terminal stretch at 1 to 25 is a signal peptide; that stretch reads MDRGTLPLAVALLLASCSLSPTSLA. The OR1, N-terminal part stretch occupies residues 26–46; that stretch reads ETVHCDLQPVGPERGEVTYTT. Positions 26–337 are required for interaction with GDF2; the sequence is ETVHCDLQPV…SSCGGRLQTS (312 aa). At 26-586 the chain is on the extracellular side; sequence ETVHCDLQPV…PDLSGCTSKG (561 aa). 7 cysteine pairs are disulfide-bonded: C30–C207, C53–C182, C242–C330, C350–C382, C363–C442, C394–C412, and C493–C549. Residues 47-199 form an OR2 region; sequence SQVSKGCVAQ…MGRTLEWRPR (153 aa). Residues N88, N102, N121, and N134 are each glycosylated (N-linked (GlcNAc...) asparagine). Positions 200–330 are OR1, C-terminal part; that stretch reads TPALVRGCHL…SIVSLHASSC (131 aa). Residues 270-282 are essential for interaction with GDF2; it reads QIWTTGEYSFKIF. N307 carries N-linked (GlcNAc...) asparagine glycosylation. One can recognise a ZP domain in the interval 363–533; the sequence is CADDAMTLVL…PEGDPRFSFL (171 aa). Residues 399-401 carry the Cell attachment site motif; that stretch reads RGD. Residues 587-611 traverse the membrane as a helical segment; sequence LVLPAVLGITFGAFLIGALLTAALW. Over 612–658 the chain is Cytoplasmic; the sequence is YIYSHTRSPSKREPVVAVAAPASSESSSTNHSIGSTQSTPCSTSSMA. Positions 626–639 are enriched in low complexity; that stretch reads VVAVAAPASSESSS. Residues 626–658 form a disordered region; the sequence is VVAVAAPASSESSSTNHSIGSTQSTPCSTSSMA. Positions 640-658 are enriched in polar residues; it reads TNHSIGSTQSTPCSTSSMA. 2 positions are modified to phosphoserine; by TGFBR1: S646 and S649.

In terms of assembly, homodimer; disulfide-linked. Forms a heteromeric complex with the signaling receptors for transforming growth factor-beta: TGFBR1 and/or TGFBR2. It is able to bind TGFB1 and TGFB2 with high affinity, but not TGFB3. Interacts with GDF2, forming a heterotetramer with a 2:2 stoichiometry. Interacts with ACVRL1. Can form a heteromeric complex with GDF2 and ACVRL1. Interacts with BMP10. Interacts with DYNLT4. Interacts with ARRB2. Detected on umbilical veil endothelial cells. Detected in placenta (at protein level). Detected on endothelial cells.

The protein localises to the cell membrane. Functionally, vascular endothelium glycoprotein that plays an important role in the regulation of angiogenesis. Required for normal structure and integrity of adult vasculature. Regulates the migration of vascular endothelial cells. Required for normal extraembryonic angiogenesis and for embryonic heart development. May regulate endothelial cell shape changes in response to blood flow, which drive vascular remodeling and establishment of normal vascular morphology during angiogenesis. May play a critical role in the binding of endothelial cells to integrins and/or other RGD receptors. Acts as a TGF-beta coreceptor and is involved in the TGF-beta/BMP signaling cascade that ultimately leads to the activation of SMAD transcription factors. Required for GDF2/BMP9 signaling through SMAD1 in endothelial cells and modulates TGFB1 signaling through SMAD3. This Homo sapiens (Human) protein is Endoglin (ENG).